Reading from the N-terminus, the 500-residue chain is Prostacyclin synthase (500 aa).

A helical transmembrane segment spans residues 1-20 (MSWAVVFGLLAALLLLLLLT). Residues Arg106, Leu112, Asn287, 358 to 359 (TR), and Arg382 contribute to the substrate site. Residue Cys441 coordinates heme.

The protein belongs to the cytochrome P450 family. It depends on heme as a cofactor.

The protein localises to the endoplasmic reticulum membrane. It catalyses the reaction prostaglandin H2 = prostaglandin I2. It carries out the reaction a hydroperoxyeicosatetraenoate = an oxoeicosatetraenoate + H2O. The enzyme catalyses (15S)-hydroperoxy-(5Z,8Z,11Z,13E)-eicosatetraenoate = 15-oxo-(5Z,8Z,11Z,13E)-eicosatetraenoate + H2O. The catalysed reaction is (15S)-hydroperoxy-(5Z,8Z,11Z,13E)-eicosatetraenoate + AH2 = (15S)-hydroxy-(5Z,8Z,11Z,13E)-eicosatetraenoate + A + H2O. Its function is as follows. Catalyzes the biosynthesis and metabolism of eicosanoids. Catalyzes the isomerization of prostaglandin H2 to prostacyclin (= prostaglandin I2), a potent mediator of vasodilation and inhibitor of platelet aggregation. Additionally, displays dehydratase activity, toward hydroperoxyeicosatetraenoates (HPETEs), especially toward (15S)-hydroperoxy-(5Z,8Z,11Z,13E)-eicosatetraenoate (15(S)-HPETE). The polypeptide is Prostacyclin synthase (PTGIS) (Bos taurus (Bovine)).